The primary structure comprises 892 residues: MLSAKILQSSGFHRKQCPLCKSYFWTRRADQIYCGDQPCVPYGFIGNPPARASVESLADLRERFLRFFERNSHVRIRRYPVVARWRDDVYLVGASIYDFQPWVTSGAVPPPANPLAISQPSIRLTDVDKVGRSGRHLTGFEMMAHHAFNYPDKYVYWIDETTQYAYEFFTRELGIPPDEITFKESMWEGGGNAGECFEVLIRGLEVATLVFMHYEVKDGRYVELPLKIVDTGYGLERIYWLLKGTPTVYDAVFGPYLAKARQRLGVPEPPAEVMGKASVYFGQMDPEVIGLEKAYDIIAEKIGVDPKWLREVVRPQEALYVLADHSRTVSWMIADGVIPSNTGAGYLARLLIRRILKNLRLAGVDAPLVELFDMHLAELKREYPEVWEARGLILELVDMEERRYREVLKSAPAAVKKALEEARRRGRAGLDADDLVALYDSQGIPPEVAAEVAKSLGTEVKVPDDFYAKLAARHVKREKKPESSPVEMGKVADLPRTRELFYEDSYMRSFKARVLRVIDGRYVVLDQTAFYPEGGGQPADRGVLKFQGGEAKVVDVQRVGHVVVHVVEGQPPPEGAEVVGEVDWERRYSLMKMHTGTHVLIQSIRRVLGSHIWQAGAQKDIPSSRIDVTHHRLPTAEEVARIEELANRAVQADLPVYAKIMPRNEAEAKYGFVLYQGGVVPAREIRVLQIGPDEQPYDVQACGGTHLRSTGEIGLIKIQKVERIADGVVRFVFTTGMHALAYVQELERRAAEAASIAGGSRDELVEAVRRLAQRAEEADRRARRYAELYAAALAENLKAEQVGRHRLAVVELDDEELARKIALAATSRDRDLVLVFVGGGRATVYTGGVDVAPIVKALREVGFRGGGSKTFAQGQYKGDIQTLKEAIRRALA.

Zn(2+) is bound by residues His594, His598, Cys702, and His706.

Belongs to the class-II aminoacyl-tRNA synthetase family. Zn(2+) is required as a cofactor.

The protein resides in the cytoplasm. The enzyme catalyses tRNA(Ala) + L-alanine + ATP = L-alanyl-tRNA(Ala) + AMP + diphosphate. Its function is as follows. Catalyzes the attachment of alanine to tRNA(Ala) in a two-step reaction: alanine is first activated by ATP to form Ala-AMP and then transferred to the acceptor end of tRNA(Ala). Also edits incorrectly charged Ser-tRNA(Ala) and Gly-tRNA(Ala) via its editing domain. The polypeptide is Alanine--tRNA ligase (Pyrobaculum neutrophilum (strain DSM 2338 / JCM 9278 / NBRC 100436 / V24Sta) (Thermoproteus neutrophilus)).